Reading from the N-terminus, the 120-residue chain is Large ribosomal subunit protein uL18 (120 aa).

It belongs to the universal ribosomal protein uL18 family. Part of the 50S ribosomal subunit; part of the 5S rRNA/L5/L18/L25 subcomplex. Contacts the 5S and 23S rRNAs.

In terms of biological role, this is one of the proteins that bind and probably mediate the attachment of the 5S RNA into the large ribosomal subunit, where it forms part of the central protuberance. The sequence is that of Large ribosomal subunit protein uL18 from Brucella abortus (strain S19).